We begin with the raw amino-acid sequence, 196 residues long: S-norcoclaurine synthase 2 (196 aa).

Positions 1-19 are cleaved as a signal peptide; sequence MRMEVVLVVFLMFIGTINC. 104–106 contacts dopamine; that stretch reads YRE. Residue K118 is the Proton donor of the active site. D137 lines the (4-hydroxyphenyl)acetaldehyde pocket.

This sequence belongs to the BetVI family.

The catalysed reaction is (4-hydroxyphenyl)acetaldehyde + dopamine = (S)-norcoclaurine + H2O. Not inhibited by O-phenanthroline or EDTA. In terms of biological role, involved in the biosynthesis of the common precursor of all benzylisoquinoline alkaloids such as morphine, sanguinarine, codeine or berberine. Condenses dopamine and pyruvic acid or 4-hydroxyphenylpyruvate. The chain is S-norcoclaurine synthase 2 (PR10A) from Coptis japonica (Japanese goldthread).